The following is a 242-amino-acid chain: Probable transcriptional regulatory protein EUBREC_1961 (242 aa).

The protein belongs to the TACO1 family.

It localises to the cytoplasm. The chain is Probable transcriptional regulatory protein EUBREC_1961 from Agathobacter rectalis (strain ATCC 33656 / DSM 3377 / JCM 17463 / KCTC 5835 / VPI 0990) (Eubacterium rectale).